Consider the following 118-residue polypeptide: Myotrophin (118 aa).

3 ANK repeats span residues 1–30, 34–65, and 67–98; these read MSDKEFMWALKNGDLDEVKDYVAKGEDVNR, GGRKPLHYAADCGQLEILEFLLLKGADINAPD, and HNITPLLSAVYEGHVSCVKLLLSKGADKTVKG.

The protein belongs to the myotrophin family.

Its subcellular location is the cytoplasm. The protein localises to the nucleus. It localises to the perinuclear region. Its function is as follows. Regulates NF-kappa-B transcription factor activity. Promotes growth of cardiomyocytes, but not cardiomyocyte proliferation. Promotes cardiac muscle hypertrophy. Plays a role in the regulation of the growth of actin filaments. Inhibits the activity of the F-actin-capping protein complex. The chain is Myotrophin (MTPN) from Gallus gallus (Chicken).